The following is a 215-amino-acid chain: MRLEAENLAGERGGETIFSHLSFTIGTGQALVVTGPNGSGKSTLLRIICGLLAPEAGEVKLTEGTQIVPVRAACHYLGHQNAMKPALSVRENLLFWQKFNGGEALDIGAALEAVDLAGVEHLPFGYLSTGQKRRVSIAKLLVSHRPLWIVDEPTAGLDKASEARFAELMREHMRQDGMIIAATHIPLGLDGAISTTGNALVRSLDMAAFSVEDIA.

In terms of domain architecture, ABC transporter spans 3–215; sequence LEAENLAGER…MAAFSVEDIA (213 aa). 35–42 is an ATP binding site; that stretch reads GPNGSGKS.

The protein belongs to the ABC transporter superfamily. CcmA exporter (TC 3.A.1.107) family. In terms of assembly, the complex is composed of two ATP-binding proteins (CcmA) and two transmembrane proteins (CcmB).

The protein localises to the cell inner membrane. The catalysed reaction is heme b(in) + ATP + H2O = heme b(out) + ADP + phosphate + H(+). In terms of biological role, part of the ABC transporter complex CcmAB involved in the biogenesis of c-type cytochromes; once thought to export heme, this seems not to be the case, but its exact role is uncertain. Responsible for energy coupling to the transport system. This chain is Cytochrome c biogenesis ATP-binding export protein CcmA, found in Brucella abortus (strain 2308).